We begin with the raw amino-acid sequence, 301 residues long: F-actin-capping protein subunit beta (301 aa).

Ser31 carries the phosphoserine modification. An N6-acetyllysine modification is found at Lys264.

Belongs to the F-actin-capping protein beta subunit family. In terms of assembly, component of the F-actin capping complex, composed of a heterodimer of an alpha and a beta subunit. Subunit of dynactin, a multiprotein complex part of a tripartite complex with dynein and a adapter, such as BICDL1, BICD2 or HOOK3. The dynactin complex is built around ACTR1A/ACTB filament and consists of an actin-related filament composed of a shoulder domain, a pointed end and a barbed end. Its length is defined by its flexible shoulder domain. The soulder is composed of 2 DCTN1 subunits, 4 DCTN2 and 2 DCTN3. The 4 DCNT2 (via N-terminus) bind the ACTR1A filament and act as molecular rulers to determine the length. The pointed end is important for binding dynein-dynactin cargo adapters. Consists of 4 subunits: ACTR10, DCNT4, DCTN5 and DCTN6. The barbed end is composed of a CAPZA1:CAPZB heterodimers, which binds ACTR1A/ACTB filament and dynactin and stabilizes dynactin. Interacts with ARHGAP17. Interaction with RCSD1/CAPZIP. Component of the WASH complex, composed of F-actin-capping protein subunit alpha (CAPZA1, CAPZA2 or CAPZA3), F-actin-capping protein subunit beta (CAPZB), WASH (WASHC1, WASH2P, WASH3P, WASH4P, WASH5P or WASH6P), WASHC2 (WASHC2A or WASHC2C), WASHC3, WASHC4 and WASHC5. Interacts with ACTG1. Directly interacts with CRACD; this interaction decreases binding to actin. As to expression, the isoform beta-3 is predominantly expressed in the testis. It is only detected in total sperm, sperm heads and the calyx fraction, but not in sperm tails or any supernatant fraction. Weaker expression also found in brain.

Its subcellular location is the cytoplasm. The protein localises to the cytoskeleton. The protein resides in the perinuclear theca. It is found in the calyx. Functionally, F-actin-capping proteins bind in a Ca(2+)-independent manner to the fast growing ends of actin filaments (barbed end) thereby blocking the exchange of subunits at these ends. Unlike other capping proteins (such as gelsolin and severin), these proteins do not sever actin filaments. Plays a role in the regulation of cell morphology and cytoskeletal organization. Forms, with CAPZB, the barbed end of the fast growing ends of actin filaments in the dynactin complex and stabilizes dynactin structure. The dynactin multiprotein complex activates the molecular motor dynein for ultra-processive transport along microtubules. The protein is F-actin-capping protein subunit beta (CAPZB) of Bos taurus (Bovine).